The chain runs to 419 residues: Histone acetyltransferase type B catalytic subunit (419 aa).

Ala-2 bears the N-acetylalanine mark. An N6-acetyllysine mark is found at Lys-9 and Lys-15. Residues 62–64 are interaction with histone H4 N-terminus; that stretch reads DDE. At Ser-190 the chain carries Phosphoserine. The interval 225–227 is interaction with histone H4 N-terminus; the sequence is YNY. Residues 241–243 and 248–254 each bind acetyl-CoA; these read MLI and QGQGHGA. The Proton donor/acceptor role is filled by Glu-276. Ser-343 is subject to Phosphoserine.

This sequence belongs to the HAT1 family. As to quaternary structure, catalytic subunit of the type B histone acetyltransferase (HAT) complex, composed of RBBP7 and HAT1. Interacts with histones H4 and H2A. The interaction is dependent of the ability of RBBP7 to bind to the N-terminus of histones. Component of the histone H3.1 and H3.3 complexes. Phosphorylated by AMPK at Ser-190; phosphorylation increases HAT1 activity.

The protein localises to the nucleus matrix. Its subcellular location is the mitochondrion. The catalysed reaction is L-lysyl-[protein] + acetyl-CoA = N(6)-acetyl-L-lysyl-[protein] + CoA + H(+). In terms of biological role, histone acetyltransferase that plays a role in different biological processes including cell cycle progression, glucose metabolism, histone production or DNA damage repair. Coordinates histone production and acetylation via H4 promoter binding. Acetylates histone H4 at 'Lys-5' (H4K5ac) and 'Lys-12' (H4K12ac) and, to a lesser extent, histone H2A at 'Lys-5' (H2AK5ac). Drives H4 production by chromatin binding to support chromatin replication and acetylation. Since transcription of H4 genes is tightly coupled to S-phase, plays an important role in S-phase entry and progression. Promotes homologous recombination in DNA repair by facilitating histone turnover and incorporation of acetylated H3.3 at sites of double-strand breaks. In addition, acetylates other substrates such as chromatin-related proteins. Also acetylates RSAD2 which mediates the interaction of ubiquitin ligase UBE4A with RSAD2 leading to RSAD2 ubiquitination and subsequent degradation. This chain is Histone acetyltransferase type B catalytic subunit (Hat1), found in Rattus norvegicus (Rat).